We begin with the raw amino-acid sequence, 1093 residues long: Protein transport protein Sec24A (1093 aa).

Disordered regions lie at residues 1–29 (MSQPGIPASGGAPASLQAQNGAALASGSP), 60–168 (HPIP…TSLT), 189–226 (GPSVPPLVNPPLPTTFQPGAPHGPPPAGGPPPVRALTP), and 294–328 (SLPPGYQNTTPPGATGVPPSSLNYPSGPQAFTQTP). Composition is skewed to polar residues over residues 112 to 126 (ASQNPATTPMPSSSF) and 138 to 168 (WQYNYPSTASQTNHCPRASSQPTVSGNTSLT). 2 stretches are compositionally biased toward pro residues: residues 191–201 (SVPPLVNPPLP) and 209–221 (PHGPPPAGGPPPV). A compositionally biased stretch (polar residues) spans 299-328 (YQNTTPPGATGVPPSSLNYPSGPQAFTQTP). Positions 431, 434, 452, and 455 each coordinate Zn(2+). Residues 431–455 (CRSCRTYINPFVSFLDQRRWKCNLC) form a zinc finger-like region. One copy of the Gelsolin-like repeat lies at 966–1038 (PQPPILQLSV…TPESARIIAF (73 aa)).

The protein belongs to the SEC23/SEC24 family. SEC24 subfamily. In terms of assembly, COPII is composed of at least five proteins: the Sec23/24 complex, the Sec13/31 complex and Sar1. Interacts with TMED2. Interacts (as part of the Sec23/24 complex) with SEC22B; recruits SEC22B into COPII-coated vesicles for its transport from the endoplasmic reticulum to the Golgi. Interacts with STING1; promoting STING1 translocation to COPII vesicles in a STEEP1-dependent manner. Interacts with TMEM39A. Interacts with SACM1L; this interaction is reduced in the absence of TMEM39A. Interacts with kinase FAM20C; transport of FAM20C from the endoplasmic reticulum to the Golgi is likely to be mediated by COPII vesicles.

It is found in the cytoplasmic vesicle. The protein localises to the COPII-coated vesicle membrane. It localises to the endoplasmic reticulum membrane. The protein resides in the cytoplasm. Its subcellular location is the cytosol. Component of the coat protein complex II (COPII) which promotes the formation of transport vesicles from the endoplasmic reticulum (ER). The coat has two main functions, the physical deformation of the endoplasmic reticulum membrane into vesicles and the selection of cargo molecules for their transport to the Golgi complex. Plays a central role in cargo selection within the COPII complex and together with SEC24B may have a different specificity compared to SEC24C and SEC24D. May package preferentially cargos with cytoplasmic DxE or LxxLE motifs and may also recognize conformational epitopes. This chain is Protein transport protein Sec24A, found in Homo sapiens (Human).